The following is a 448-amino-acid chain: 4-hydroxybenzoate transporter PcaK (448 aa).

The Cytoplasmic segment spans residues 1 to 30 (MNQAQNSVGKSLDVQSFINQQPLSRYQWRV). A helical transmembrane segment spans residues 31–51 (VLLCFLIVFLDGLDTAAMGFI). Residues 52 to 67 (APALSQEWGIDRASLG) lie on the Periplasmic side of the membrane. The chain crosses the membrane as a helical span at residues 68–88 (PVMSAALIGMVFGALGSGPLA). Topologically, residues 89–94 (DRFGRK) are cytoplasmic. A helical transmembrane segment spans residues 95–115 (GVLVGAVLVFGGFSLASAYAT). The Periplasmic segment spans residues 116-119 (NVDQ). Residues 120 to 140 (LLVLRFLTGLGLGAGMPNATT) traverse the membrane as a helical segment. The Cytoplasmic segment spans residues 141 to 152 (LLSEYTPERLKS). A helical membrane pass occupies residues 153–173 (LLVTSMFCGFNLGMAGGGFIS). The Periplasmic portion of the chain corresponds to 174 to 184 (AKMIPAYGWHS). The helical transmembrane segment at 185 to 205 (LLVIGGVLPLLLALVLMVWLP) threads the bilayer. Residues 206-261 (ESARFLVVRNRGTDKIRKTLSPIAPQVVAEAGSFSVPEQKAVAARSVFAVIFSGTY) lie on the Cytoplasmic side of the membrane. Residues 262–282 (GLGTMLLWLTYFMGLVIVYLL) traverse the membrane as a helical segment. The Periplasmic portion of the chain corresponds to 283–301 (TSWLPTLMRDSGASMEQAA). The chain crosses the membrane as a helical span at residues 302–322 (FIGALFQFGGVLSAVGVGWAM). The Cytoplasmic portion of the chain corresponds to 323-329 (DRYNPHK). The helical transmembrane segment at 330–350 (VIGIFYLLAGVFAYAVGQSLG) threads the bilayer. Residue Asn351 is a topological domain, periplasmic. A helical membrane pass occupies residues 352 to 372 (ITVLATLVLIAGMCVNGAQSA). Over 373–398 (MPSLAARFYPTQGRATGVSWMLGIGR) the chain is Cytoplasmic. A helical transmembrane segment spans residues 399–419 (FGAILGAWSGATLLGLGWNFE). The Periplasmic portion of the chain corresponds to 420–421 (QV). Residues 422-442 (LTALLVPAALATVGVIVKGLV) traverse the membrane as a helical segment. Residues 443–448 (SHADAT) lie on the Cytoplasmic side of the membrane.

It belongs to the major facilitator superfamily. Aromatic acid:H(+) symporter (AAHS) (TC 2.A.1.15) family.

It localises to the cell inner membrane. Transports 4-hydroxybenzoate (4-HBA) and protocatechuate across the membrane. Driven by the proton motive force. Also functions as a chemoreceptor, which is required for chemotaxis to aromatic acids. The polypeptide is 4-hydroxybenzoate transporter PcaK (pcaK) (Pseudomonas putida (Arthrobacter siderocapsulatus)).